The primary structure comprises 102 residues: Small ribosomal subunit protein uS10 (102 aa).

Belongs to the universal ribosomal protein uS10 family. As to quaternary structure, part of the 30S ribosomal subunit.

Functionally, involved in the binding of tRNA to the ribosomes. The protein is Small ribosomal subunit protein uS10 of Methanoregula boonei (strain DSM 21154 / JCM 14090 / 6A8).